The primary structure comprises 157 residues: MKFTLLVVGRTVEKHYITAINDYVERTKHFISFDMEVIPELKNTKNLSMEQQKEKEGELILKALLPGDVVVLLDEHGKEFRSVEFANWIERKMHTVNKRLVFIIGGPYGFAPKIYDAAQEKISLSKMTFSHQMIRLIFVEQLYRAMTILNNGPYHHE.

S-adenosyl-L-methionine-binding positions include leucine 73, glycine 105, and leucine 124 to phenylalanine 129.

Belongs to the RNA methyltransferase RlmH family. Homodimer.

It is found in the cytoplasm. The catalysed reaction is pseudouridine(1915) in 23S rRNA + S-adenosyl-L-methionine = N(3)-methylpseudouridine(1915) in 23S rRNA + S-adenosyl-L-homocysteine + H(+). Functionally, specifically methylates the pseudouridine at position 1915 (m3Psi1915) in 23S rRNA. The polypeptide is Ribosomal RNA large subunit methyltransferase H (Phocaeicola vulgatus (strain ATCC 8482 / DSM 1447 / JCM 5826 / CCUG 4940 / NBRC 14291 / NCTC 11154) (Bacteroides vulgatus)).